Here is a 541-residue protein sequence, read N- to C-terminus: Synaptotagmin-1 (541 aa).

The Extracellular segment spans residues Met-1–Cys-11. A helical membrane pass occupies residues Gly-12 to Leu-32. Over Pro-33 to Ser-541 the chain is Cytoplasmic. Residues Asp-67 to Leu-249 enclose the SMP-LTD domain. The segment at Gln-227–Val-509 is phospholipid binding. C2 domains lie at Trp-240–Leu-362 and Gly-401–Phe-521. Residues Asp-276, Asp-282, Asp-332, and Glu-334 each coordinate Ca(2+).

Belongs to the synaptotagmin family. Interacts with cabbage leaf curl virus (CaLCuV) BC1 protein and tobacco mosaic virus (TMV) MP protein. Interacts with ROSY1. Ca(2+) serves as cofactor. Expressed in roots, shoots, rosette and cauline leaves, inflorescences, and siliques. In roots, expressed in vascular bundle, epidermis, the differential zone of the tips of root hairs, and the quiescent center and columella of root tips.

It is found in the cell membrane. The protein resides in the endosome membrane. Functionally, plays an important role in maintaining plasma membrane integrity during freezing and osmotic stresses. May function in membrane resealing during calcium-dependent freezing tolerance. May regulate endocytosis and endosome recycling at the plasma membrane and cell-to-cell trafficking of cabbage leaf curl virus (CaLCuV) and tobacco mosaic virus (TMV) movement proteins via plasmodesmata. This is Synaptotagmin-1 (SYT1) from Arabidopsis thaliana (Mouse-ear cress).